A 164-amino-acid polypeptide reads, in one-letter code: 6,7-dimethyl-8-ribityllumazine synthase (164 aa).

5-amino-6-(D-ribitylamino)uracil contacts are provided by residues Tyr-30, 61 to 63 (ALE), and 85 to 87 (CVI). 90–91 (ET) is a binding site for (2S)-2-hydroxy-3-oxobutyl phosphate. His-93 functions as the Proton donor in the catalytic mechanism. Asn-118 lines the 5-amino-6-(D-ribitylamino)uracil pocket. Arg-132 is a (2S)-2-hydroxy-3-oxobutyl phosphate binding site.

Belongs to the DMRL synthase family.

The catalysed reaction is (2S)-2-hydroxy-3-oxobutyl phosphate + 5-amino-6-(D-ribitylamino)uracil = 6,7-dimethyl-8-(1-D-ribityl)lumazine + phosphate + 2 H2O + H(+). It functions in the pathway cofactor biosynthesis; riboflavin biosynthesis; riboflavin from 2-hydroxy-3-oxobutyl phosphate and 5-amino-6-(D-ribitylamino)uracil: step 1/2. Catalyzes the formation of 6,7-dimethyl-8-ribityllumazine by condensation of 5-amino-6-(D-ribitylamino)uracil with 3,4-dihydroxy-2-butanone 4-phosphate. This is the penultimate step in the biosynthesis of riboflavin. The protein is 6,7-dimethyl-8-ribityllumazine synthase of Methylobacterium radiotolerans (strain ATCC 27329 / DSM 1819 / JCM 2831 / NBRC 15690 / NCIMB 10815 / 0-1).